The following is a 305-amino-acid chain: GTP cyclohydrolase FolE2 (305 aa).

This sequence belongs to the GTP cyclohydrolase IV family.

It catalyses the reaction GTP + H2O = 7,8-dihydroneopterin 3'-triphosphate + formate + H(+). The protein operates within cofactor biosynthesis; 7,8-dihydroneopterin triphosphate biosynthesis; 7,8-dihydroneopterin triphosphate from GTP: step 1/1. Its function is as follows. Converts GTP to 7,8-dihydroneopterin triphosphate. The chain is GTP cyclohydrolase FolE2 from Xanthomonas axonopodis pv. citri (strain 306).